The primary structure comprises 1164 residues: MKKNTVSEMDQRLGYKFLVPDPKAGVFYRPLHFQYVSYSNFILHRLHEILTVKRPLLSFKNNTERIMIEISNVKVTPPDYSPIIASIKGKSYDALATFTVNIFKEVMTKEGISITKISSYEGKDSHLIKIPLLIGYGNKNPLDTAKYLVPNVIGGVFINKQSVEKVGINLVEKITTWPKFRVVKPNSFTFSFSSVSPPNVLPTRYRHYKISLDISQLEASNISSTKTFITVNIVLLSQYLSRVSLEFIRRSLSYDMPPEVVYLVNAIIDSAKRLTESITDFDIDTYINDLVEAEHIKQKSQLTINEFKYEMLHNFLPHMNYTPDQLKGFYMISLLRKFLYCIYHTSRYPDRDSMVCHRILTYGKYFETLAHDELENYIGNIRNDIMNNHKNRGTYAVNIHVLTTPGLNHAFSSLLSGKFKKSDGSYRTHPHYSWMQNISIPRSVGFYPDQVKISKMFSVRKYHPSQYLYFCSSDVPERGPQVGLVSQLSVLSSITNILTSEYLDLEKKICEYIRSYYKDDISYFETGFPITIENALVASLNPNMICDFVTDFRRRKRMGFFGNLEVGITLVRDHMNEIRINIGAGRLVRPFLVVDNGELMTDVCPELESRLDDMTFSDIQKEFPHVIEMVDIDQFTFSNVCESVQKFRMMSKDERKQYDLCDFPAEFRDGYVASSLVGINHNSGPRAILGCAQAKQAISCLSSDIRNKIDNGIHLMYPERPIVISKALETSKIAANCFGQHVTIALMSYKGINQEDGIIIKKQFIQRGGLDIVTAKKHQVEIPLENFNNKERDRSNAYSKLESNGLVRLNAFLESGDAMARNISSRTLEDDFARDNQISFDVSEKYTDMYKSRVERVQVELTDKVKVRVLTMKERRPILGDKFTTRTSQKGTVAYIADETELPYDENGITPDVIINSTSIFSRKTISMLIEVILTAAYSTKPYNNKGENRPVCFPSSNETSIDAYMQFAKQCYEYSNPKLSEEELSDKIFCEKILYDPETDKPYESKVFFGPIYYLRLRHLTQDKATVRCRGKKTKLIRQANEGRKRGGGIKFGEMERDCLIAHGAANTITEVLKDSEEDYQDVYICENCGDIAAQIKSINTCLRCSKLNLSPLLTKIDTTHVSKVFLTQMNARGVKVKLDFERRPPSFYKPLDKVDLKPSFLV.

Belongs to the RNA polymerase beta chain family. In terms of assembly, the DNA-dependent RNA polymerase used for intermediate and late genes expression consists of eight subunits (147) kDa, (133) kDa, (35) kDa, (30) kDa, (22) kDa, (19) kDa, (18) kDa and (7) kDa totalling more than 500 kDa in mass. The same holoenzyme, with the addition of the transcription-specificity factor RAP94, is used for early gene expression.

The protein localises to the virion. It catalyses the reaction RNA(n) + a ribonucleoside 5'-triphosphate = RNA(n+1) + diphosphate. In terms of biological role, part of the DNA-dependent RNA polymerase which catalyzes the transcription of viral DNA into RNA using the four ribonucleoside triphosphates as substrates. Responsible for the transcription of early, intermediate and late genes. DNA-dependent RNA polymerase associates with the early transcription factor (ETF), itself composed of D6 and A7, thereby allowing the early genes transcription. Late transcription, and probably also intermediate transcription, require newly synthesized RNA polymerase. The protein is DNA-directed RNA polymerase 132 kDa polypeptide (RPO132) of Monkeypox virus (strain Zaire-96-I-16) (MPX).